A 59-amino-acid chain; its full sequence is MANTVKVKLVKGLIGTRETHRATVRGLGLRGINSVSELEDTPAVRGMINKVSYLVKVVS.

Belongs to the universal ribosomal protein uL30 family. In terms of assembly, part of the 50S ribosomal subunit.

The polypeptide is Large ribosomal subunit protein uL30 (Herminiimonas arsenicoxydans).